A 599-amino-acid polypeptide reads, in one-letter code: MFS-type transporter ucsM (599 aa).

The span at 23-34 (AHHHGKEREAHR) shows a compositional bias: basic and acidic residues. Residues 23–42 (AHHHGKEREAHRQSLSSVPG) form a disordered region. 8 helical membrane passes run 147 to 167 (VALG…GAWL), 178 to 198 (ILIG…GAVP), 204 to 224 (GKGT…AGLF), 263 to 283 (IMLI…ATVY), 291 to 311 (WLAF…LWYL), 386 to 406 (IFLY…ILPS), 424 to 444 (FNPI…YPAL), and 454 to 474 (ISRI…SSLV). The N-linked (GlcNAc...) asparagine glycan is linked to Asn-517. The next 2 membrane-spanning stretches (helical) occupy residues 539-559 (LFLF…PAIV) and 563-583 (LVWV…IFWV).

The protein belongs to the major facilitator superfamily. Proton-dependent oligopeptide transporter (POT/PTR) (TC 2.A.17) family.

The protein resides in the membrane. MFS-type transporter; part of the gene cluster that mediates the biosynthesis of UCS1025A, a member of the pyrrolizidinone family that acts as a strong telomerase inhibitor and displays potent antibacterial and antitumor properties. These compounds share a hemiaminal-containing pyrrolizidinone core fused with a gamma-lactone, giving a furopyrrolizidine that is connected to a decalin fragment. The chain is MFS-type transporter ucsM from Acremonium sp.